The primary structure comprises 433 residues: Protein CLP1 homolog (433 aa).

Residues Glu22, Arg61, and 128–133 contribute to the ATP site; that span reads DVGKTT.

The protein belongs to the Clp1 family. Clp1 subfamily.

It is found in the nucleus. Its function is as follows. Required for endonucleolytic cleavage during polyadenylation-dependent pre-mRNA 3'-end formation. In Brugia malayi (Filarial nematode worm), this protein is Protein CLP1 homolog.